Here is a 305-residue protein sequence, read N- to C-terminus: Acetyl-coenzyme A carboxylase carboxyl transferase subunit beta (305 aa).

One can recognise a CoA carboxyltransferase N-terminal domain in the interval 25–293 (LWVQCPACQQ…LPKVESVASL (269 aa)). Residues Cys29, Cys32, Cys48, and Cys51 each coordinate Zn(2+). The segment at 29-51 (CPACQQMIFARDLEKNQRVCTHC) adopts a C4-type zinc-finger fold.

The protein belongs to the AccD/PCCB family. As to quaternary structure, acetyl-CoA carboxylase is a heterohexamer composed of biotin carboxyl carrier protein (AccB), biotin carboxylase (AccC) and two subunits each of ACCase subunit alpha (AccA) and ACCase subunit beta (AccD). It depends on Zn(2+) as a cofactor.

The protein localises to the cytoplasm. The catalysed reaction is N(6)-carboxybiotinyl-L-lysyl-[protein] + acetyl-CoA = N(6)-biotinyl-L-lysyl-[protein] + malonyl-CoA. It functions in the pathway lipid metabolism; malonyl-CoA biosynthesis; malonyl-CoA from acetyl-CoA: step 1/1. Its function is as follows. Component of the acetyl coenzyme A carboxylase (ACC) complex. Biotin carboxylase (BC) catalyzes the carboxylation of biotin on its carrier protein (BCCP) and then the CO(2) group is transferred by the transcarboxylase to acetyl-CoA to form malonyl-CoA. The sequence is that of Acetyl-coenzyme A carboxylase carboxyl transferase subunit beta from Granulibacter bethesdensis (strain ATCC BAA-1260 / CGDNIH1).